Here is a 251-residue protein sequence, read N- to C-terminus: MSESKLAEQFLDAAIGLLQRVRDEDAEPIAAAGTLIADTVADGGRLFAFGAGHSSLAAQDLVYRAGGLALMNLLAVPGVVGVDVMPATLGSALERVDGLASAVLDSSPVRSGDVLVIISLSGRNALPVEMSMNARALGVKVIGVTSVAYASQTRSRHVSGTYLKDHCDIVLDSRIAVGDAELTLDTIEAPFAPASTVVTTALLQAVMATAAGTLADRGIEPPLLRSGNVDGGHDWNDRVMREYGDRIFYRR.

In terms of domain architecture, SIS spans 36–220 (IADTVADGGR…AGTLADRGIE (185 aa)).

It belongs to the UPF0309 family.

This Streptomyces avermitilis (strain ATCC 31267 / DSM 46492 / JCM 5070 / NBRC 14893 / NCIMB 12804 / NRRL 8165 / MA-4680) protein is UPF0309 protein SAV_3856.